A 429-amino-acid chain; its full sequence is 26S proteasome regulatory subunit 6A homolog (429 aa).

Residues 1 to 21 are disordered; the sequence is MSSPPPAAAAAMAVDDADDDQ. 217 to 224 is an ATP binding site; it reads GPPGTGKT.

Belongs to the AAA ATPase family.

It localises to the cytoplasm. The protein resides in the nucleus. The 26S proteasome is involved in the ATP-dependent degradation of ubiquitinated proteins. The regulatory (or ATPase) complex confers ATP dependency and substrate specificity to the 26S complex. This is 26S proteasome regulatory subunit 6A homolog (TBP1) from Oryza sativa subsp. japonica (Rice).